Here is a 111-residue protein sequence, read N- to C-terminus: NADH-ubiquinone oxidoreductase chain 3 (111 aa).

3 consecutive transmembrane segments (helical) span residues 2–22 (ILIW…GMFV), 54–74 (FFVI…LLPM), and 82–102 (PTTY…FYEW).

The protein belongs to the complex I subunit 3 family.

It is found in the mitochondrion membrane. The enzyme catalyses a ubiquinone + NADH + 5 H(+)(in) = a ubiquinol + NAD(+) + 4 H(+)(out). In terms of biological role, core subunit of the mitochondrial membrane respiratory chain NADH dehydrogenase (Complex I) that is believed to belong to the minimal assembly required for catalysis. Complex I functions in the transfer of electrons from NADH to the respiratory chain. The immediate electron acceptor for the enzyme is believed to be ubiquinone. The protein is NADH-ubiquinone oxidoreductase chain 3 (ND3) of Artemia franciscana (Brine shrimp).